We begin with the raw amino-acid sequence, 272 residues long: uncharacterized protein (272 aa).

Residues 12–34, 39–40, 77–78, and N104 contribute to the NAD(+) site; these read FITGAARGLGRAHAVRLAADGAN, DI, and DV. S153 lines the substrate pocket. Residue Y170 is the Proton acceptor of the active site. NAD(+)-binding positions include K174 and 203 to 205; that span reads VDT.

This sequence belongs to the short-chain dehydrogenases/reductases (SDR) family.

This is an uncharacterized protein from Mycobacterium tuberculosis (strain CDC 1551 / Oshkosh).